The primary structure comprises 417 residues: Ankyrin repeat and SAM domain-containing protein 4B (417 aa).

Residues 1-252 form a mediates localization to microvilli region; that stretch reads MSTRYHQAAS…SGDFKEKLQL (252 aa). ANK repeat units follow at residues 31–60, 64–93, and 97–126; these read DGMT…DPDR, WGNT…NIFA, and DLQT…AQNI. Residues 130 to 164 are a coiled coil; the sequence is KKVTRLKEQAQKNARRQIKECERLQEKHQNKMAHT. The tract at residues 151 to 195 is disordered; sequence ERLQEKHQNKMAHTYSKEESGTLSSSKGTFSRSSPSNASAPGTFG. Over residues 171–190 the composition is skewed to polar residues; it reads GTLSSSKGTFSRSSPSNASA. The segment at 253-346 is mediates interaction with MYO7B; sequence SAEEDGSVHH…EWEEDVVDAT (94 aa). Serine 283 carries the post-translational modification Phosphoserine. Residues 305 to 330 form a disordered region; sequence RQGASEADEGAADEEGEENGLKDDLP. The segment covering 310–322 has biased composition (acidic residues); it reads EADEGAADEEGEE. Residues 351–403 enclose the SAM domain; sequence FLLSQHLEEFLPIFKREQIDLEALLLCSDEDLQSIQMQLGPRKKVLNAINRRK. Residues 415 to 417 carry the PDZ-binding; mediates interaction with USH1C motif; it reads TSL.

As to quaternary structure, part of the IMAC/intermicrovillar adhesion complex/intermicrovillar tip-link complex composed of ANKS4B, MYO7B, USH1C, CDHR2 and CDHR5. Interacts with USH1C; the interaction is direct and is required for ANKS4B localization to the tip of microvilli. Interacts with MYO7B; the interaction is direct. May interact with HSPA5. Expressed in kidney and small intestine.

It localises to the cell projection. Its subcellular location is the microvillus. In terms of biological role, as part of the intermicrovillar adhesion complex/IMAC plays a role in epithelial brush border differentiation, controlling microvilli organization and length. Plays a role in assembly of the complex. May play a role in cellular response to endoplasmic reticulum stress. The chain is Ankyrin repeat and SAM domain-containing protein 4B from Homo sapiens (Human).